A 481-amino-acid polypeptide reads, in one-letter code: Trigger factor (481 aa).

Positions 174-261 (GDIAVVSFKG…LKDLKEKELP (88 aa)) constitute a PPIase FKBP-type domain. Residues 435–481 (VKEKTTKASQASKTTKAKKTTTKTTKATKTATKTTKATKTQNKKEKK) are disordered. Positions 456 to 474 (TKTTKATKTATKTTKATKT) are enriched in low complexity.

Belongs to the FKBP-type PPIase family. Tig subfamily.

It is found in the cytoplasm. It carries out the reaction [protein]-peptidylproline (omega=180) = [protein]-peptidylproline (omega=0). Involved in protein export. Acts as a chaperone by maintaining the newly synthesized protein in an open conformation. Functions as a peptidyl-prolyl cis-trans isomerase. This Prochlorococcus marinus (strain MIT 9312) protein is Trigger factor.